The sequence spans 201 residues: Prostamide/prostaglandin F synthase (201 aa).

It belongs to the peroxiredoxin-like PRXL2 family. Prostamide/prostaglandin F synthase subfamily.

The protein localises to the cytoplasm. The protein resides in the cytosol. It carries out the reaction prostaglandin H2 + [thioredoxin]-dithiol = prostaglandin F2alpha + [thioredoxin]-disulfide. The catalysed reaction is prostamide F2alpha + [thioredoxin]-disulfide = prostamide H2 + [thioredoxin]-dithiol. Its function is as follows. Catalyzes the reduction of prostaglandin-ethanolamide H(2) (prostamide H(2)) to prostamide F(2alpha) with NADPH as proton donor. Also able to reduce prostaglandin H(2) to prostaglandin F(2alpha). The protein is Prostamide/prostaglandin F synthase (prxl2b) of Xenopus laevis (African clawed frog).